We begin with the raw amino-acid sequence, 69 residues long: Small cysteine-rich protein (69 aa).

An N-terminal signal peptide occupies residues 1 to 19; the sequence is MKLQLCLVLLLLGVLYVQS. Positions 20–22 are excised as a propeptide; the sequence is VPE.

It belongs to the Cnidaria small cysteine-rich protein (SCRiP) family. delta subfamily. Post-translationally, contains 4 disulfide bonds.

Its subcellular location is the secreted. The protein localises to the nematocyst. Its function is as follows. Induces neurotoxic symptoms on zebrafish. Has also been claimed to be implied in calcification, but this function seems improbable. This chain is Small cysteine-rich protein, found in Metridium senile (Brown sea anemone).